The chain runs to 553 residues: Urocanate hydratase (553 aa).

Residues 45-46 (GG), Q123, 169-171 (GMG), D189, R194, 235-236 (NA), 256-260 (QTSAH), 266-267 (YV), Y315, and G485 contribute to the NAD(+) site.

Belongs to the urocanase family. NAD(+) serves as cofactor.

The protein localises to the cytoplasm. It catalyses the reaction 4-imidazolone-5-propanoate = trans-urocanate + H2O. Its pathway is amino-acid degradation; L-histidine degradation into L-glutamate; N-formimidoyl-L-glutamate from L-histidine: step 2/3. Catalyzes the conversion of urocanate to 4-imidazolone-5-propionate. The chain is Urocanate hydratase from Staphylococcus aureus (strain Mu50 / ATCC 700699).